The following is a 215-amino-acid chain: Protein C' (215 aa).

2 disordered regions span residues 12–34 (MPSF…SRSR) and 51–71 (SEGT…QALP). An involved in self-degradation and in host STAT1 degradation region spans residues 15–22 (FLKKILKL). The segment covering 51–65 (SEGTEAGSTTPSTLP) has biased composition (polar residues).

This sequence belongs to the respirovirus protein C family. The different isoforms interact (via C-terminus) with unphosphorylated and phosphorylated human STAT1 (via N-terminus), favoring the formation of parallel STAT1 homodimers. The different isoforms do not interact with host STAT2. C protein interacts with L protein; this interaction has an inhibitory effect on viral transcription and replication. Y1 and Y2 proteins are produced not only by alternative initiation, but also by proteolytic cleavage of C'. Only alternative initiation is detected in vitro, whereas in vivo cleavage seems to be predominant.

Its subcellular location is the host cytoplasm. The different products prevent the establishment of cellular antiviral state by blocking the interferon-alpha/beta (IFN-alpha/beta) and IFN-gamma signaling pathways. They inhibit IFN-alpha/beta induced tyrosine phosphorylation of STAT1 and STAT2. Blocking the IFN-alpha/beta pathway requires binding to STAT1 in the cytoplasm. They inhibit IFN-gamma induced serine phosphorylation of STAT1. Block the IFN-gamma pathway by binding to and stabilizing the parallel form of the STAT1 dimer, further inducing high-molecular-weight complex formation and inhibition of transcription by IFN-gamma. May also have a role in preventing the cell to enter apoptosis. Modulate regulation of viral transcription and replication. Overexpression inhibits the viral RNA polymerase. The absence of all C', C, Y1 and Y2 proteins leads to viral delayed growth. Plays an important role in virion particles release. Modulates virion shape. The chain is Protein C' (P/V/C) from Sendai virus (strain Harris) (SeV).